Here is a 147-residue protein sequence, read N- to C-terminus: Hemoglobin subunit epsilon (147 aa).

A Globin domain is found at 3 to 147 (HFTAEEKTAI…VASALAHKYH (145 aa)). Phosphoserine is present on residues S14 and S51. The heme b site is built by H64 and H93.

It belongs to the globin family. Red blood cells.

In terms of biological role, hemoglobin epsilon chain is an embryonic-type beta-type chain found in prenatal and neonatal marsupials. This chain is Hemoglobin subunit epsilon (HBE1), found in Notamacropus eugenii (Tammar wallaby).